The following is a 78-amino-acid chain: Acyl carrier protein (78 aa).

A Carrier domain is found at 1-76 (MSVAEKVKEI…DAISFIEKKK (76 aa)). The residue at position 36 (Ser-36) is an O-(pantetheine 4'-phosphoryl)serine.

The protein belongs to the acyl carrier protein (ACP) family. Post-translationally, 4'-phosphopantetheine is transferred from CoA to a specific serine of apo-ACP by AcpS. This modification is essential for activity because fatty acids are bound in thioester linkage to the sulfhydryl of the prosthetic group.

The protein resides in the cytoplasm. It participates in lipid metabolism; fatty acid biosynthesis. Carrier of the growing fatty acid chain in fatty acid biosynthesis. The sequence is that of Acyl carrier protein from Solidesulfovibrio magneticus (strain ATCC 700980 / DSM 13731 / RS-1) (Desulfovibrio magneticus).